A 249-amino-acid polypeptide reads, in one-letter code: 2,3-bisphosphoglycerate-dependent phosphoglycerate mutase (249 aa).

Substrate-binding positions include 8 to 15 (RHGESVWN), 21 to 22 (TG), arginine 60, 87 to 90 (ERHY), lysine 98, 114 to 115 (RR), and 183 to 184 (GN). Catalysis depends on histidine 9, which acts as the Tele-phosphohistidine intermediate. The active-site Proton donor/acceptor is the glutamate 87.

It belongs to the phosphoglycerate mutase family. BPG-dependent PGAM subfamily.

It catalyses the reaction (2R)-2-phosphoglycerate = (2R)-3-phosphoglycerate. It participates in carbohydrate degradation; glycolysis; pyruvate from D-glyceraldehyde 3-phosphate: step 3/5. Catalyzes the interconversion of 2-phosphoglycerate and 3-phosphoglycerate. The sequence is that of 2,3-bisphosphoglycerate-dependent phosphoglycerate mutase from Endomicrobium trichonymphae.